A 303-amino-acid polypeptide reads, in one-letter code: Mycothiol acetyltransferase (303 aa).

2 N-acetyltransferase domains span residues 4 to 141 and 154 to 303; these read ITVR…RSLA and IVLR…ANGA. Glutamate 38 contributes to the 1D-myo-inositol 2-(L-cysteinylamino)-2-deoxy-alpha-D-glucopyranoside binding site. Residue 80-82 participates in acetyl-CoA binding; the sequence is AAV. 1D-myo-inositol 2-(L-cysteinylamino)-2-deoxy-alpha-D-glucopyranoside-binding residues include glutamate 181, lysine 223, and glutamate 234. Acetyl-CoA-binding positions include 238–240 and 245–251; these read VGI and QGRGLGR. Tyrosine 272 lines the 1D-myo-inositol 2-(L-cysteinylamino)-2-deoxy-alpha-D-glucopyranoside pocket. Residue 277-282 coordinates acetyl-CoA; the sequence is NTAAVN.

The protein belongs to the acetyltransferase family. MshD subfamily. In terms of assembly, monomer.

The catalysed reaction is 1D-myo-inositol 2-(L-cysteinylamino)-2-deoxy-alpha-D-glucopyranoside + acetyl-CoA = mycothiol + CoA + H(+). Its function is as follows. Catalyzes the transfer of acetyl from acetyl-CoA to desacetylmycothiol (Cys-GlcN-Ins) to form mycothiol. The polypeptide is Mycothiol acetyltransferase (Nocardia farcinica (strain IFM 10152)).